The sequence spans 339 residues: Ketol-acid reductoisomerase (NADP(+)) (339 aa).

Residues 1-182 (MRVYYDRDAD…GGGRSGVIET (182 aa)) enclose the KARI N-terminal Rossmann domain. NADP(+)-binding positions include 24 to 27 (YGSQ), Arg-48, Ser-51, Thr-53, and 83 to 86 (DELQ). His-108 is an active-site residue. Gly-134 provides a ligand contact to NADP(+). In terms of domain architecture, KARI C-terminal knotted spans 183-328 (TFKEECETDL…EKLRGMMPWI (146 aa)). Residues Asp-191, Glu-195, Glu-227, and Glu-231 each coordinate Mg(2+). Residue Ser-252 coordinates substrate.

This sequence belongs to the ketol-acid reductoisomerase family. Requires Mg(2+) as cofactor.

The catalysed reaction is (2R)-2,3-dihydroxy-3-methylbutanoate + NADP(+) = (2S)-2-acetolactate + NADPH + H(+). It carries out the reaction (2R,3R)-2,3-dihydroxy-3-methylpentanoate + NADP(+) = (S)-2-ethyl-2-hydroxy-3-oxobutanoate + NADPH + H(+). It participates in amino-acid biosynthesis; L-isoleucine biosynthesis; L-isoleucine from 2-oxobutanoate: step 2/4. It functions in the pathway amino-acid biosynthesis; L-valine biosynthesis; L-valine from pyruvate: step 2/4. Functionally, involved in the biosynthesis of branched-chain amino acids (BCAA). Catalyzes an alkyl-migration followed by a ketol-acid reduction of (S)-2-acetolactate (S2AL) to yield (R)-2,3-dihydroxy-isovalerate. In the isomerase reaction, S2AL is rearranged via a Mg-dependent methyl migration to produce 3-hydroxy-3-methyl-2-ketobutyrate (HMKB). In the reductase reaction, this 2-ketoacid undergoes a metal-dependent reduction by NADPH to yield (R)-2,3-dihydroxy-isovalerate. In Brucella anthropi (strain ATCC 49188 / DSM 6882 / CCUG 24695 / JCM 21032 / LMG 3331 / NBRC 15819 / NCTC 12168 / Alc 37) (Ochrobactrum anthropi), this protein is Ketol-acid reductoisomerase (NADP(+)).